The sequence spans 383 residues: Probable transcriptional repressor C1348.12 (383 aa).

Residues 34 to 60 (CVICRSKKQKCDGQLPCLYCKKYEYQC) constitute a DNA-binding region (zn(2)-C6 fungal-type).

The protein resides in the nucleus. Functionally, probable transcriptional repressor of multidrug resistance genes. The protein is Probable transcriptional repressor C1348.12 of Schizosaccharomyces pombe (strain 972 / ATCC 24843) (Fission yeast).